The following is a 66-amino-acid chain: Large ribosomal subunit protein bL33c (66 aa).

Belongs to the bacterial ribosomal protein bL33 family.

The protein resides in the plastid. Its subcellular location is the chloroplast. This is Large ribosomal subunit protein bL33c from Eucalyptus globulus subsp. globulus (Tasmanian blue gum).